The primary structure comprises 179 residues: Large ribosomal subunit protein uL6 (179 aa).

This sequence belongs to the universal ribosomal protein uL6 family. As to quaternary structure, part of the 50S ribosomal subunit.

This protein binds to the 23S rRNA, and is important in its secondary structure. It is located near the subunit interface in the base of the L7/L12 stalk, and near the tRNA binding site of the peptidyltransferase center. This is Large ribosomal subunit protein uL6 from Kineococcus radiotolerans (strain ATCC BAA-149 / DSM 14245 / SRS30216).